The chain runs to 71 residues: Pro-MCH (71 aa).

Positions 1–20 (AKMSLSSYILILTLVLFSQG) are cleaved as a signal peptide.

The protein belongs to the melanin-concentrating hormone family.

The protein resides in the secreted. The sequence is that of Pro-MCH (PMCH) from Carlito syrichta (Philippine tarsier).